The sequence spans 310 residues: ADP-L-glycero-D-manno-heptose-6-epimerase (310 aa).

Residues 10-11 (FI), 31-32 (DN), Lys-38, Lys-53, 75-79 (EGACS), and Asn-92 contribute to the NADP(+) site. Catalysis depends on Tyr-140, which acts as the Proton acceptor. Position 144 (Lys-144) interacts with NADP(+). Position 169 (Asn-169) interacts with substrate. 2 residues coordinate NADP(+): Val-170 and Lys-178. Lys-178 (proton acceptor) is an active-site residue. Substrate-binding positions include Ser-180, His-187, 201–204 (FEGS), Arg-209, and Tyr-272.

Belongs to the NAD(P)-dependent epimerase/dehydratase family. HldD subfamily. Homopentamer. It depends on NADP(+) as a cofactor.

The enzyme catalyses ADP-D-glycero-beta-D-manno-heptose = ADP-L-glycero-beta-D-manno-heptose. Its pathway is nucleotide-sugar biosynthesis; ADP-L-glycero-beta-D-manno-heptose biosynthesis; ADP-L-glycero-beta-D-manno-heptose from D-glycero-beta-D-manno-heptose 7-phosphate: step 4/4. Functionally, catalyzes the interconversion between ADP-D-glycero-beta-D-manno-heptose and ADP-L-glycero-beta-D-manno-heptose via an epimerization at carbon 6 of the heptose. The polypeptide is ADP-L-glycero-D-manno-heptose-6-epimerase (Salmonella newport (strain SL254)).